Here is a 273-residue protein sequence, read N- to C-terminus: Ciliary microtubule inner protein 2B (273 aa).

2 disordered regions span residues 59–85 (TLLP…GHER) and 123–164 (RHGE…HASP). A compositionally biased stretch (basic and acidic residues) spans 123 to 159 (RHGEQESHQLPDGAKGEREVEEDQLREAEEPPLKQEL).

It belongs to the CIMIP2 family. In terms of assembly, microtubule inner protein component of sperm flagellar doublet microtubules. As to expression, expressed in airway epithelial cells.

It localises to the cytoplasm. The protein localises to the cytoskeleton. It is found in the cilium axoneme. The protein resides in the flagellum axoneme. Its function is as follows. Microtubule inner protein (MIP) part of the dynein-decorated doublet microtubules (DMTs) in cilia axoneme, which is required for motile cilia beating. This chain is Ciliary microtubule inner protein 2B (Cimip2b), found in Mus musculus (Mouse).